We begin with the raw amino-acid sequence, 210 residues long: 3-phospho-D-glycerate guanylyltransferase (210 aa).

This sequence belongs to the CofC family.

It carries out the reaction (2R)-3-phosphoglycerate + GTP + H(+) = 3-[(R)-glyceryl]-diphospho-5'-guanosine + diphosphate. It functions in the pathway cofactor biosynthesis; coenzyme F420 biosynthesis. In terms of biological role, guanylyltransferase that catalyzes the activation of (2R)-3-phosphoglycerate (3PG) as 3-[(R)-glyceryl]-diphospho-5'-guanosine, via the condensation of 3PG with GTP. It is involved in the biosynthesis of a derivative of the hydride carrier cofactor coenzyme F420, 3PG-F420. This is 3-phospho-D-glycerate guanylyltransferase from Colwellia psychrerythraea (strain 34H / ATCC BAA-681) (Vibrio psychroerythus).